The sequence spans 260 residues: Sulfoquinovose 1-dehydrogenase (260 aa).

Tyr-160 (proton acceptor) is an active-site residue.

This sequence belongs to the short-chain dehydrogenases/reductases (SDR) family.

It carries out the reaction 6-sulfo-D-quinovose + NAD(+) = 6-deoxy-6-sulfo-D-glucono-1,5-lactone + NADH + H(+). Its function is as follows. Catalyzes the oxidation of sulfoquinovose to 6-deoxy-6-sulfo-D-glucono-1,5-lactone, with a strong preference for NAD(+) as the electron acceptor. Is involved in a degradation pathway of sulfoquinovose (SQ) that allows P.putida SQ1 to use SQ as the sole carbon and energy source for growth. The sequence is that of Sulfoquinovose 1-dehydrogenase from Pseudomonas putida (Arthrobacter siderocapsulatus).